The sequence spans 64 residues: Chromatin protein Cren7 (64 aa).

Belongs to the Cren7 family. In terms of assembly, monomer. Post-translationally, methylated at multiple sites, to varying extents.

Its subcellular location is the chromosome. The protein localises to the cytoplasm. Its function is as follows. A chromatin protein, binds double-stranded DNA without sequence specificity. Constrains negative DNA supercoils. The chain is Chromatin protein Cren7 from Aeropyrum pernix (strain ATCC 700893 / DSM 11879 / JCM 9820 / NBRC 100138 / K1).